A 357-amino-acid chain; its full sequence is S-adenosylmethionine:tRNA ribosyltransferase-isomerase (357 aa).

This sequence belongs to the QueA family. As to quaternary structure, monomer.

It localises to the cytoplasm. The catalysed reaction is 7-aminomethyl-7-carbaguanosine(34) in tRNA + S-adenosyl-L-methionine = epoxyqueuosine(34) in tRNA + adenine + L-methionine + 2 H(+). Its pathway is tRNA modification; tRNA-queuosine biosynthesis. Transfers and isomerizes the ribose moiety from AdoMet to the 7-aminomethyl group of 7-deazaguanine (preQ1-tRNA) to give epoxyqueuosine (oQ-tRNA). This Edwardsiella ictaluri (strain 93-146) protein is S-adenosylmethionine:tRNA ribosyltransferase-isomerase.